Consider the following 448-residue polypeptide: Leukocyte immunoglobulin-like receptor subfamily B member 4 (448 aa).

The N-terminal stretch at 1–21 is a signal peptide; sequence MIPTFTALLCLGLSLGPRTHM. Residues 22-259 are Extracellular-facing; sequence QAGPLPKPTL…PHSGLRRHWE (238 aa). Ig-like C2-type domains follow at residues 27 to 118 and 124 to 218; these read PKPT…LVMT and PTLS…LIVS. Intrachain disulfides connect C49–C98 and C144–C195. The interval 217–248 is disordered; sequence VSGSLEDPRPSPTRSVSTAAGPEDQPLMPTGS. The chain crosses the membrane as a helical span at residues 260-280; that stretch reads VLIGVLVVSILLLSLLLFLLL. Topologically, residues 281–448 are cytoplasmic; that stretch reads QHWRQGKHRT…PSVYATLAIH (168 aa). The interval 297–448 is disordered; it reads DFQRPPGAAE…PSVYATLAIH (152 aa). S319 is subject to Phosphoserine. Over residues 344–354 the composition is skewed to basic and acidic residues; it reads MDTRQSPHDED. An ITIM motif 1 motif is present at residues 358–363; that stretch reads VTYAKV. The span at 384 to 398 shows a compositional bias: basic and acidic residues; the sequence is LDTKDRQAEEDRQMD. 2 consecutive short sequence motifs (ITIM motif) follow at residues 410-415 and 440-445; these read VTYAQL and SVYATL.

As to quaternary structure, interacts with PTPN6. In terms of tissue distribution, detected on monocytes, macrophages, dendritic cells, natural killer cells and B-cells (at protein level). Expressed in the lung.

The protein localises to the cell membrane. Inhibitory receptor involved in the down-regulation of the immune response and the development of immune tolerance. Receptor for FN1. Receptor for apolipoprotein APOE. Receptor for ALCAM/CD166. Inhibits receptor-mediated phosphorylation of cellular proteins and mobilization of intracellular calcium ions. Inhibits FCGR1A/CD64-mediated monocyte activation by inducing phosphatase-mediated down-regulation of the phosphorylation of multiple proteins including LCK, SYK, LAT and ERK, leading to a reduction in TNF production. This inhibition of monocyte activation occurs at least in part via binding to FN1. Inhibits T cell proliferation, inducing anergy, suppressing the differentiation of IFNG-producing CD8+ cytotoxic T cells and enhancing the generation of CD8+ T suppressor cells. Induces up-regulation of CD86 on dendritic cells. Interferes with TNFRSF5-signaling and NF-kappa-B up-regulation. This is Leukocyte immunoglobulin-like receptor subfamily B member 4 (LILRB4) from Homo sapiens (Human).